The following is a 350-amino-acid chain: Probable poly-beta-1,6-N-acetyl-D-glucosamine export protein (350 aa).

10 helical membrane-spanning segments follow: residues 7-29 (ELVY…TQIT), 44-66 (FYIR…LLTT), 79-101 (TRVK…SESL), 116-138 (LLGQ…SYII), 145-167 (LFNS…YYFT), 187-204 (IIFG…MGYN), 211-233 (FLER…FIAL), 243-262 (SFSY…ILGI), 269-291 (MLFN…HPII), and 306-328 (TMVF…GMIL).

The protein belongs to the acyltransferase 3 family.

It is found in the cell membrane. Functionally, presumably involved in the export of the biofilm adhesin polysaccharide poly-beta-1,6-N-acetyl-D-glucosamine (PNAG, also referred to as PIA) across the cell membrane. In Staphylococcus aureus (strain MRSA252), this protein is Probable poly-beta-1,6-N-acetyl-D-glucosamine export protein (icaC).